A 656-amino-acid polypeptide reads, in one-letter code: Methylenetetrahydrofolate reductase (NADPH) (656 aa).

The span at 1–12 (MVNEARGNSSLN) shows a compositional bias: polar residues. Residues 1–44 (MVNEARGNSSLNPCLEGSASSGSESSKDSSRCSTPGLDPERHER) are disordered. S9, S10, S18, S20, S21, S23, S25, S26, S29, and S30 each carry phosphoserine. Position 34 is a phosphothreonine (T34). The active-site Proton donor/acceptor is the E63. 63–68 (EFFPPR) lines the NAD(+) pocket. Y90 carries the phosphotyrosine modification. T94 is subject to Phosphothreonine. NAD(+) is bound at residue 94–95 (TW). 94 to 95 (TW) contributes to the FAD binding site. S103 carries the phosphoserine modification. FAD is bound by residues H127, 157–159 (RGD), 174–175 (YA), Y197, 201–204 (HPEA), D210, and K217. D159 lines the substrate pocket. Residues Q228, Y321, and R325 each contribute to the substrate site. A Phosphoserine modification is found at S394. At T451 the chain carries Phosphothreonine. Residues N456, 461 to 464 (AAET), 481 to 485 (TINSQ), T560, and T573 each bind S-adenosyl-L-methionine.

Belongs to the methylenetetrahydrofolate reductase family. Homodimer. The cofactor is FAD. Post-translationally, phosphorylation of an N-terminal serine-rich phosphorylation region increases sensitivity to S-adenosylmethionine and inhibition.

The enzyme catalyses (6S)-5-methyl-5,6,7,8-tetrahydrofolate + NADP(+) = (6R)-5,10-methylene-5,6,7,8-tetrahydrofolate + NADPH + H(+). It participates in one-carbon metabolism; tetrahydrofolate interconversion. With respect to regulation, allosterically regulated by S-adenosylmethionine (SAM). Functionally, catalyzes the conversion of 5,10-methylenetetrahydrofolate to 5-methyltetrahydrofolate, a cosubstrate for homocysteine remethylation to methionine. Represents a key regulatory connection between the folate and methionine cycles. This chain is Methylenetetrahydrofolate reductase (NADPH), found in Homo sapiens (Human).